A 111-amino-acid chain; its full sequence is Dormancy-associated protein 1 (111 aa).

The tract at residues 30 to 60 (KDDGASNQLMRSTSIPTTPTTPVTPTTPSSA) is disordered. Low complexity predominate over residues 41-59 (STSIPTTPTTPVTPTTPSS).

This sequence belongs to the DRM1/ARP family. In terms of tissue distribution, expressed in axilary buds and in non-growing stems and roots. Detected in sepals, stamens and carpels, but barely detected in petals or leaflets.

This chain is Dormancy-associated protein 1, found in Pisum sativum (Garden pea).